The primary structure comprises 475 residues: Zinc finger protein 296 (475 aa).

The disordered stretch occupies residues 1–78 (MSRRKAGSAP…SPGPMPAGAA (78 aa)). A Glycyl lysine isopeptide (Lys-Gly) (interchain with G-Cter in SUMO2) cross-link involves residue Lys-35. 3 C2H2-type zinc fingers span residues 157–180 (LSCL…QWDH), 231–253 (PTCP…MRSH), and 259–281 (YACD…KKTH). The interval 275-385 (NRHKKTHRQV…KSGGKSRGPG (111 aa)) is disordered. Low complexity-rich tracts occupy residues 295 to 313 (SQEQ…AAAP) and 326 to 338 (GAAA…EPGA). The span at 339-351 (PGSGAQAGPGGDT) shows a compositional bias: gly residues. The span at 354 to 367 (AITTEQRTDPANSQ) shows a compositional bias: polar residues. 3 C2H2-type zinc fingers span residues 386 to 408 (GSCE…RRSH), 414 to 436 (YTCE…RRMH), and 445 to 468 (FECP…RQKH).

The protein belongs to the krueppel C2H2-type zinc-finger protein family. Interacts with KLF4.

Its subcellular location is the nucleus. Functionally, may be a transcriptional corepressor with KLF4. This chain is Zinc finger protein 296 (ZNF296), found in Homo sapiens (Human).